The following is a 152-amino-acid chain: MDEQEIQRLVEEVSLQYFEMPFLHKAVFNNRLRTTGGRYLLKSHNIELNYRYYEVYGEEELVGIIKHELCHYHLHIAGRGYKHRDRDFRELLKKVDAPRFCKRMINEEKEKKIYKYECMECSLQYVRRRQINTKRYVCGKCKGKLKPISKTS.

Positions 7–147 (QRLVEEVSLQ…CGKCKGKLKP (141 aa)) constitute a SprT-like domain. Residue histidine 67 coordinates Zn(2+). Glutamate 68 is a catalytic residue. Histidine 71 is a binding site for Zn(2+).

It belongs to the SprT family. Zn(2+) is required as a cofactor.

The protein resides in the cytoplasm. This is Protein SprT-like from Bacillus cereus (strain B4264).